We begin with the raw amino-acid sequence, 174 residues long: Sarcoplasmic calcium-binding protein (174 aa).

Ser-1 is subject to N-acetylserine. EF-hand domains lie at 3–38 (LWVQKMKTYFNRIDFDKDGAITRKDFESMATRFAKE), 55–90 (GVWDKFLANVAGGKGIDQATFISSMKEKVKDPNAKA), 91–126 (VVEGPLPLFFRAVDTNEDNMISRDEYGIFFNMLGLN), and 125–160 (LNPDMAPASFDAIDTNNDGLLSQEEFVTAGSDFFIN). 4 residues coordinate Ca(2+): Asp-16, Asp-18, Asp-20, and Asp-27. Ca(2+)-binding residues include Asp-104, Asn-106, Asp-108, Met-110, Glu-115, Asp-138, Asn-140, Asp-142, and Glu-149.

In terms of biological role, like parvalbumins, SCPs seem to be more abundant in fast contracting muscles, but no functional relationship can be established from this distribution. The protein is Sarcoplasmic calcium-binding protein of Perinereis vancaurica tetradentata (Sandworm).